A 117-amino-acid chain; its full sequence is Hydrogenase maturation factor HypA (117 aa).

H2 contacts Ni(2+). Positions 73, 76, 89, and 92 each coordinate Zn(2+).

This sequence belongs to the HypA/HybF family.

Involved in the maturation of [NiFe] hydrogenases. Required for nickel insertion into the metal center of the hydrogenase. This Chlorobium luteolum (strain DSM 273 / BCRC 81028 / 2530) (Pelodictyon luteolum) protein is Hydrogenase maturation factor HypA.